The sequence spans 357 residues: Acyl-CoA Delta12-desaturase (357 aa).

Helical transmembrane passes span 49–69 and 72–92; these read VLWF…IFAS and IYTT…ITAG. Fe cation is bound by residues His-94, His-99, His-131, His-134, and His-135. Positions 94-99 match the Histidine box-1 motif; the sequence is HRLWAH. Residues 131-135 carry the Histidine box-2 motif; that stretch reads HRVHH. Transmembrane regions (helical) follow at residues 195-215 and 223-245; these read LVPF…WGET and STMF…AHMW. His-243, His-272, His-275, and His-276 together coordinate Fe cation. The Histidine box-3 signature appears at 272–276; the sequence is HNFHH.

Belongs to the fatty acid desaturase type 1 family. Fe(2+) is required as a cofactor.

The protein localises to the membrane. It carries out the reaction (9Z)-octadecenoyl-CoA + 2 Fe(II)-[cytochrome b5] + O2 + 2 H(+) = (9Z,12Z)-octadecadienoyl-CoA + 2 Fe(III)-[cytochrome b5] + 2 H2O. The enzyme catalyses (9Z)-hexadecenoyl-CoA + 2 Fe(II)-[cytochrome b5] + O2 + 2 H(+) = (9Z,12Z)-hexadecadienoyl-CoA + 2 Fe(III)-[cytochrome b5] + 2 H2O. It catalyses the reaction hexadecanoyl-CoA + 2 Fe(II)-[cytochrome b5] + O2 + 2 H(+) = (9Z)-hexadecenoyl-CoA + 2 Fe(III)-[cytochrome b5] + 2 H2O. Its function is as follows. Catalyzes the formation of a Delta12 double bond, acting on monounsaturated fatty acyl substrates like palmitoleoyl-CoA ((9Z)-hexadecenoyl-CoA) and oleoyl-CoA ((9Z)-octadecenoyl-CoA) with higher desaturation activity on (9Z)-octadecenoyl-CoA than (9Z)-hexadecenoyl-CoA. Requires preexisting cis double bond at the Delta9 position of fatty acyls to be able to insert the Delta12 double bond. Delta12-desaturation of (9Z)-octadecenoyl-CoA in insects produces (9Z,12Z)-octadecadienoyl-CoA (linoleoyl-CoA) which may be used to supply precursors of crucial mediators of immunity and reproduction and other essential functions. Can also catalyze Delta9-desaturation on saturated fatty acyl substrates like palmitoyl-CoA (hexadecanoyl-CoA) but with lower efficiency. This Acheta domesticus (House cricket) protein is Acyl-CoA Delta12-desaturase.